A 204-amino-acid polypeptide reads, in one-letter code: Pyrrolidone-carboxylate peptidase (204 aa).

Catalysis depends on residues E78, C141, and H165.

The protein belongs to the peptidase C15 family. Homotetramer.

It is found in the cytoplasm. It catalyses the reaction Release of an N-terminal pyroglutamyl group from a polypeptide, the second amino acid generally not being Pro.. Its function is as follows. Removes 5-oxoproline from various penultimate amino acid residues except L-proline. The protein is Pyrrolidone-carboxylate peptidase of Levilactobacillus brevis (strain ATCC 367 / BCRC 12310 / CIP 105137 / JCM 1170 / LMG 11437 / NCIMB 947 / NCTC 947) (Lactobacillus brevis).